The chain runs to 905 residues: Protein translocase subunit SecA (905 aa).

ATP contacts are provided by residues glutamine 87, 105-109 (GEGKT), and aspartate 512. The interval 836–905 (DVDAVDEQRK…KKYKHCHGKL (70 aa)) is disordered. Positions 841 to 858 (DEQRKAADSAPREFRHEQ) are enriched in basic and acidic residues. Residues cysteine 890, cysteine 892, cysteine 901, and histidine 902 each coordinate Zn(2+). Over residues 896–905 (KKYKHCHGKL) the composition is skewed to basic residues.

Belongs to the SecA family. As to quaternary structure, monomer and homodimer. Part of the essential Sec protein translocation apparatus which comprises SecA, SecYEG and auxiliary proteins SecDF-YajC and YidC. The cofactor is Zn(2+).

Its subcellular location is the cell inner membrane. It is found in the cytoplasm. It carries out the reaction ATP + H2O + cellular proteinSide 1 = ADP + phosphate + cellular proteinSide 2.. In terms of biological role, part of the Sec protein translocase complex. Interacts with the SecYEG preprotein conducting channel. Has a central role in coupling the hydrolysis of ATP to the transfer of proteins into and across the cell membrane, serving both as a receptor for the preprotein-SecB complex and as an ATP-driven molecular motor driving the stepwise translocation of polypeptide chains across the membrane. The sequence is that of Protein translocase subunit SecA from Idiomarina loihiensis (strain ATCC BAA-735 / DSM 15497 / L2-TR).